The primary structure comprises 443 residues: Threonine/serine transporter TdcC (443 aa).

11 helical membrane-spanning segments follow: residues 22 to 42 (TTWT…FFPI), 44 to 64 (AGFG…PIAF), 97 to 117 (GVVI…IYGV), 140 to 160 (FVAL…KDLM), 163 to 183 (VMSY…LSLI), 207 to 227 (ILIT…FSPI), 261 to 281 (MLMV…LSPA), 312 to 332 (AITL…KSFF), 366 to 386 (ISMI…PNIL), 389 to 409 (IEAM…MYAI), and 423 to 443 (DNVF…YKLF).

It belongs to the amino acid/polyamine transporter 2 family. SdaC/TdcC subfamily.

The protein localises to the cell inner membrane. It catalyses the reaction L-threonine(in) + H(+)(in) = L-threonine(out) + H(+)(out). The catalysed reaction is L-serine(in) + H(+)(in) = L-serine(out) + H(+)(out). Involved in the import of threonine and serine into the cell, with the concomitant import of a proton (symport system). In Escherichia coli O45:K1 (strain S88 / ExPEC), this protein is Threonine/serine transporter TdcC.